Reading from the N-terminus, the 481-residue chain is MADKITSRSQDYSQWYIDLVRSAKLADYSDVRGCMVIRPNGYAIWEKMQAALDAMFKETGHVNAYFPLFIPESYIAKEAEHIEGFAPECAVVTHGGGEELAEKLYVRPTSETIIWASYKKWIQSYRDLPILINQWANVVRWEMRTRLFLRTTEFLWQEGHTAHATKEEASEEVLRMITIYKKFAEEYMALPVIMGRKTESEKFAGADETFCIEAMMQDGKALQAGTSHHLGQNFAKAFDCQFQTSAGELDFVWATSWGVSTRLIGALIMAHSDDRGLVLPPKLASRQVVVIPILRGDKTAVLEQADAIVCTLKKHGIPAFVDSSDQNSPGWKFAEYELQGIPLRIELGPRDLAGKKCVVARRDTLEKTELPLDDTFSMQVSEILNSIQQNLYDRALSFRNEKTVEVKSYEEFKTAVENGFVIAHWDGTDETESKIKEETKATIRVLPEEQEYLDRYTMMEPGVCIYSGRPAARKVVFAKAY.

Belongs to the class-II aminoacyl-tRNA synthetase family. ProS type 3 subfamily. Homodimer.

Its subcellular location is the cytoplasm. It catalyses the reaction tRNA(Pro) + L-proline + ATP = L-prolyl-tRNA(Pro) + AMP + diphosphate. In terms of biological role, catalyzes the attachment of proline to tRNA(Pro) in a two-step reaction: proline is first activated by ATP to form Pro-AMP and then transferred to the acceptor end of tRNA(Pro). The polypeptide is Proline--tRNA ligase (Chlorobium limicola (strain DSM 245 / NBRC 103803 / 6330)).